Reading from the N-terminus, the 234-residue chain is ATP-dependent dethiobiotin synthetase BioD (234 aa).

Residue 12 to 17 (DVGKTF) coordinates ATP. Position 16 (T16) interacts with Mg(2+). K37 is an active-site residue. Substrate is bound at residue S41. ATP-binding positions include D52, 118–121 (EGAG), and 178–179 (SQ). Mg(2+)-binding residues include D52 and E118.

It belongs to the dethiobiotin synthetase family. Homodimer. Requires Mg(2+) as cofactor.

The protein resides in the cytoplasm. It carries out the reaction (7R,8S)-7,8-diammoniononanoate + CO2 + ATP = (4R,5S)-dethiobiotin + ADP + phosphate + 3 H(+). Its pathway is cofactor biosynthesis; biotin biosynthesis; biotin from 7,8-diaminononanoate: step 1/2. Catalyzes a mechanistically unusual reaction, the ATP-dependent insertion of CO2 between the N7 and N8 nitrogen atoms of 7,8-diaminopelargonic acid (DAPA, also called 7,8-diammoniononanoate) to form a ureido ring. This is ATP-dependent dethiobiotin synthetase BioD from Phenylobacterium zucineum (strain HLK1).